The sequence spans 132 residues: MSMTDNVADMLTRIRNAYKSKLINVSFPSSKIKTSILDVLQKEGYIKDYVTTQKNNISYAEVALKYSVNGDASICEIHRVSKPGKRVYSAIKALKGYYNNMGIYILSTPYGVMSDREAHIKNVGGEVICKVF.

It belongs to the universal ribosomal protein uS8 family. In terms of assembly, part of the 30S ribosomal subunit. Contacts proteins S5 and S12.

In terms of biological role, one of the primary rRNA binding proteins, it binds directly to 16S rRNA central domain where it helps coordinate assembly of the platform of the 30S subunit. The chain is Small ribosomal subunit protein uS8 from Rickettsia akari (strain Hartford).